A 452-amino-acid polypeptide reads, in one-letter code: Nuclear distribution protein PAC1 (452 aa).

The region spanning 12–44 is the LisH domain; that stretch reads QKDELHKAILAYFSASGLSNTGAALREELGVGD. A coiled-coil region spans residues 64-91; it reads TGVLRLQKKIMELESRLSSLQSELDSAT. WD repeat units follow at residues 117 to 158, 160 to 200, 204 to 245, 248 to 287, 290 to 350, 352 to 391, 396 to 435, and 437 to 452; these read SHRN…RTVK, HTKA…KNIR, GHDH…CVKT, GHSD…HKAT, GHEH…LKTL, GHDN…RCVK, AHSH…INVR, and VIAT…VFAS.

This sequence belongs to the WD repeat LIS1/nudF family. Self-associates. Interacts with NDL1 and dynein.

It localises to the cytoplasm. Its subcellular location is the cytoskeleton. It is found in the spindle pole. Its function is as follows. Positively regulates the activity of the minus-end directed microtubule motor protein dynein. May enhance dynein-mediated microtubule sliding by targeting dynein to the microtubule plus end. Required for nuclear migration during vegetative growth as well as development. Required for retrograde early endosome (EE) transport from the hyphal tip. Required for localization of dynein to the mitotic spindle poles. Recruits additional proteins to the dynein complex at SPBs. The polypeptide is Nuclear distribution protein PAC1 (Tuber melanosporum (strain Mel28) (Perigord black truffle)).